The chain runs to 72 residues: DNA gyrase inhibitor YacG (72 aa).

Zn(2+) contacts are provided by C17, C20, C32, and C36. The tract at residues I51–R72 is disordered.

The protein belongs to the DNA gyrase inhibitor YacG family. In terms of assembly, interacts with GyrB. The cofactor is Zn(2+).

Functionally, inhibits all the catalytic activities of DNA gyrase by preventing its interaction with DNA. Acts by binding directly to the C-terminal domain of GyrB, which probably disrupts DNA binding by the gyrase. This chain is DNA gyrase inhibitor YacG, found in Methylorubrum extorquens (strain PA1) (Methylobacterium extorquens).